Here is a 59-residue protein sequence, read N- to C-terminus: Antitoxin RelB4 (59 aa).

The disordered stretch occupies residues 38 to 59; that stretch reads VGEWLKTLGTPHQTPPPYSWRK. A compositionally biased stretch (pro residues) spans 50-59; that stretch reads QTPPPYSWRK.

Its function is as follows. Antitoxin component of a type II toxin-antitoxin (TA) system. Neutralizes the effect of cognate toxin RelE4, but no other RelE or ParE toxin. The sequence is that of Antitoxin RelB4 (relB4) from Caulobacter vibrioides (strain ATCC 19089 / CIP 103742 / CB 15) (Caulobacter crescentus).